We begin with the raw amino-acid sequence, 189 residues long: MVTMLMFLATLAGLFTTAKGQNFHLGKCPSPPVQENFDVKKYLGRWYEIEKIPASFEKGNCIQANYSLMENGNIEVLNKELSPDGTMNQVKGEAKQSNVSEPAKLEVQFFPLMPPAPYWILATDYENYALVYSCTTFFWLFHVDFVWILGRNPYLPPETITYLKDILTSNGIDIEKMTTTDQANCPDFL.

The first 20 residues, 1–20 (MVTMLMFLATLAGLFTTAKG), serve as a signal peptide directing secretion. The residue at position 21 (Gln21) is a Pyrrolidone carboxylic acid. 2 disulfide bridges follow: Cys28–Cys134 and Cys61–Cys185. Residues Asn65 and Asn98 are each glycosylated (N-linked (GlcNAc...) asparagine).

This sequence belongs to the calycin superfamily. Lipocalin family. Homodimer. As to expression, highest levels of expression in brain, testis, virgin mammary gland and salivary gland. Moderate levels in skeletal muscle, lactating mammary gland and thymus. Low levels in lung and lymph node. No expression in kidney, pancreas, liver or spleen.

The protein localises to the secreted. APOD occurs in the macromolecular complex with lecithin-transport and binding of bilin. Appears to be able to transport a variety of ligands in a number of different contexts. The chain is Apolipoprotein D (Apod) from Mus musculus (Mouse).